Consider the following 634-residue polypeptide: Probable potassium transport system protein Kup 2 (634 aa).

A run of 12 helical transmembrane segments spans residues 20 to 40 (FWTLALGSIGVVYGDIGTSPL), 64 to 84 (VLSLMLWTLLIIVTLKYVLLI), 110 to 130 (FAAISLLGMAGAALFYGDAII), 148 to 168 (PGFDPYILPLSMAILVGLFLV), 174 to 194 (AAVATWFGPLMLIWFGLMAVA), 224 to 244 (AGLLALGAVFLTVTGAEALYA), 258 to 278 (WLVLVFPALALCYLGQGAMLL), 290 to 310 (LLFPDWALLPMVWIATGATII), 348 to 368 (IYIPRANWLLLIAVLYLVFAF), 377 to 397 (AYGIAVTGTMVLTSIMAFFVM), 405 to 425 (AAVATAIIVPFLIIDLIFLMA), and 430 to 450 (IVDGGWIPLMIGVGLMGVMVT).

It belongs to the HAK/KUP transporter (TC 2.A.72) family.

The protein localises to the cell inner membrane. It catalyses the reaction K(+)(in) + H(+)(in) = K(+)(out) + H(+)(out). Functionally, transport of potassium into the cell. Likely operates as a K(+):H(+) symporter. The chain is Probable potassium transport system protein Kup 2 from Rhodopseudomonas palustris (strain ATCC BAA-98 / CGA009).